The sequence spans 392 residues: S-adenosylmethionine synthase (392 aa).

Position 20 (histidine 20) interacts with ATP. Aspartate 22 is a binding site for Mg(2+). A K(+)-binding site is contributed by glutamate 48. 2 residues coordinate L-methionine: glutamate 61 and glutamine 106. The segment at glutamine 106–lysine 116 is flexible loop. Residues aspartate 171–lysine 173, aspartate 248, arginine 254–lysine 255, alanine 271, and lysine 275 contribute to the ATP site. L-methionine is bound at residue aspartate 248. Lysine 279 is a binding site for L-methionine.

The protein belongs to the AdoMet synthase family. Homotetramer; dimer of dimers. Requires Mg(2+) as cofactor. K(+) serves as cofactor.

The protein localises to the cytoplasm. It carries out the reaction L-methionine + ATP + H2O = S-adenosyl-L-methionine + phosphate + diphosphate. The protein operates within amino-acid biosynthesis; S-adenosyl-L-methionine biosynthesis; S-adenosyl-L-methionine from L-methionine: step 1/1. Its function is as follows. Catalyzes the formation of S-adenosylmethionine (AdoMet) from methionine and ATP. The overall synthetic reaction is composed of two sequential steps, AdoMet formation and the subsequent tripolyphosphate hydrolysis which occurs prior to release of AdoMet from the enzyme. In Borreliella burgdorferi (strain ATCC 35210 / DSM 4680 / CIP 102532 / B31) (Borrelia burgdorferi), this protein is S-adenosylmethionine synthase.